Consider the following 281-residue polypeptide: Pantothenate synthetase (281 aa).

30–37 serves as a coordination point for ATP; it reads MGNLHQGH. The active-site Proton donor is His-37. A (R)-pantoate-binding site is contributed by Gln-61. Residue Gln-61 participates in beta-alanine binding. An ATP-binding site is contributed by 149–152; sequence GNKD. A (R)-pantoate-binding site is contributed by Gln-155. ATP is bound by residues Ile-178 and 186-189; that span reads MSSR.

It belongs to the pantothenate synthetase family. In terms of assembly, homodimer.

The protein resides in the cytoplasm. It catalyses the reaction (R)-pantoate + beta-alanine + ATP = (R)-pantothenate + AMP + diphosphate + H(+). The protein operates within cofactor biosynthesis; (R)-pantothenate biosynthesis; (R)-pantothenate from (R)-pantoate and beta-alanine: step 1/1. In terms of biological role, catalyzes the condensation of pantoate with beta-alanine in an ATP-dependent reaction via a pantoyl-adenylate intermediate. This is Pantothenate synthetase from Shewanella baltica (strain OS185).